Here is a 410-residue protein sequence, read N- to C-terminus: Cathepsin D (410 aa).

The N-terminal stretch at 1 to 20 (MKTPGVLLLILGLLASSSFA) is a signal peptide. A propeptide spans 21 to 64 (IIRIPLRKFTSIRRTMTEVGGSVEDLILKGPITKYSMQSSPKTT) (activation peptide). One can recognise a Peptidase A1 domain in the interval 79-405 (YYGDIGIGTP…DRDNNRVGFA (327 aa)). Intrachain disulfides connect cysteine 91–cysteine 160 and cysteine 110–cysteine 117. Aspartate 97 is an active-site residue. N-linked (GlcNAc...) asparagine glycosylation occurs at asparagine 134. Asparagine 261 carries N-linked (GlcNAc...) (high mannose) asparagine glycosylation. Cysteine 284 and cysteine 288 form a disulfide bridge. Residue aspartate 293 is part of the active site. The cysteines at positions 327 and 364 are disulfide-linked.

Belongs to the peptidase A1 family. Consists of a light chain and a heavy chain. Interacts with ADAM30; this leads to activation of CTSD. Interacts with GRN; stabilizes CTSD; increases its proteolytic activity. Post-translationally, N- and O-glycosylated. Undergoes proteolytic cleavage and activation by ADAM30.

Its subcellular location is the lysosome. It localises to the melanosome. The protein localises to the secreted. It is found in the extracellular space. It catalyses the reaction Specificity similar to, but narrower than, that of pepsin A. Does not cleave the 4-Gln-|-His-5 bond in B chain of insulin.. In terms of biological role, acid protease active in intracellular protein breakdown. Plays a role in APP processing following cleavage and activation by ADAM30 which leads to APP degradation. The protein is Cathepsin D (Ctsd) of Mus musculus (Mouse).